A 483-amino-acid chain; its full sequence is Altronate oxidoreductase (483 aa).

Residue 18-29 participates in NAD(+) binding; sequence IIQFGEGNFLRA.

The protein belongs to the mannitol dehydrogenase family. UxaB subfamily.

It catalyses the reaction D-altronate + NAD(+) = keto-D-tagaturonate + NADH + H(+). It participates in carbohydrate metabolism; pentose and glucuronate interconversion. The polypeptide is Altronate oxidoreductase (Shigella flexneri serotype 5b (strain 8401)).